Here is an 864-residue protein sequence, read N- to C-terminus: Disintegrin and metalloproteinase domain-containing protein 15 (864 aa).

The signal sequence occupies residues 1–17; it reads MRLALLWALGLLGAGSP. Residues 18–45 are disordered; the sequence is RPSPPLPNIGGTEEEQQASPERTLSGSM. Residues 18–207 constitute a propeptide that is removed on maturation; it reads RPSPPLPNIG…EQHHAHRLKR (190 aa). Residues 34 to 45 are compositionally biased toward polar residues; the sequence is QASPERTLSGSM. The short motif at 177–184 is the Cysteine switch element; sequence HTCAPSWH. Cysteine 179 serves as a coordination point for Zn(2+). The Extracellular segment spans residues 208–696; the sequence is DVVTETKIVE…TQLKATSSLT (489 aa). The region spanning 214-415 is the Peptidase M12B domain; it reads KIVELVIVAD…GMGSCLFERQ (202 aa). Asparagine 238 carries an N-linked (GlcNAc...) asparagine glycan. 4 cysteine pairs are disulfide-bonded: cysteine 324–cysteine 410, cysteine 366–cysteine 394, cysteine 368–cysteine 377, and cysteine 481–cysteine 501. Histidine 349 provides a ligand contact to Zn(2+). Glutamate 350 is an active-site residue. Residues histidine 353 and histidine 359 each contribute to the Zn(2+) site. N-linked (GlcNAc...) asparagine glycosylation is found at asparagine 390 and asparagine 393. The Disintegrin domain occupies 422–509; that stretch reads SSLCGNMFVD…QCPSDIRLGD (88 aa). Asparagine 607 and asparagine 612 each carry an N-linked (GlcNAc...) asparagine glycan. 3 disulfides stabilise this stretch: cysteine 658–cysteine 668, cysteine 662–cysteine 674, and cysteine 676–cysteine 685. The EGF-like domain occupies 658-686; the sequence is CRRKCHGHGVCDSSGHCRCEEGWAPPDCM. The chain crosses the membrane as a helical span at residues 697–717; it reads TGLLLSLLLLLVLVLLGASYW. Tyrosine 716 and tyrosine 736 each carry phosphotyrosine; by HCK and LCK. Over 718–864 the chain is Cytoplasmic; the sequence is HRARLHQRLC…PPPAASSLYL (147 aa). Positions 736-864 are disordered; that stretch reads YRAPQSCPPE…PPPAASSLYL (129 aa). Positions 741 to 750 are enriched in pro residues; it reads SCPPERPGPP. Residues 752–762 are compositionally biased toward polar residues; it reads RAQQMTGTKQA. Pro residues-rich tracts occupy residues 768 to 780 and 814 to 825; these read PVPPSRPLPPNPV and TKPPPPRKPLPA. Short sequence motifs (SH3-binding) lie at residues 816-822 and 851-857; these read PPPPRKP and RPAPPPP.

Interacts specifically with Src family protein-tyrosine kinases (PTKs). Interacts with ITAGV-ITGB3 (vitronectin receptor). Interacts with SH3GL2 and SNX9; this interaction occurs preferentially with ADAM15 precursor, rather than the processed form, suggesting it occurs in a secretory pathway compartment prior to the medial Golgi. Interacts with ITAG9-ITGB1. Interacts with SH3PXD2A. Interacts with ITAGV-ITGB1. Interacts with GRB2, HCK, ITSN1, ITSN2, LYN, MAPK1, MAPK3, NCF1, NCK1, nephrocystin, PTK6, SNX33, LCK and SRC. Zn(2+) is required as a cofactor. In terms of processing, the precursor is cleaved by a furin endopeptidase. An additional membrane proximal site of cleavage affects a small percentage of the proteins and results in disulfide-linked fragments. The prodomain is apparently cleaved in several positions that are N-terminal of the furin cleavage site. May be partially sialylated. Post-translationally, phosphorylation increases association with PTKs. Expressed moderately in pericytes of retina. Expressed in testis and in spermatozoa from the caput, corpus, and cauda epididymis, as well as in non-capacitated and acrosome-reacted sperm (at protein level). Highly expressed in heart, brain, lung, and kidney. Expressed at lower levels in spleen, liver, testis and muscle.

Its subcellular location is the endomembrane system. It is found in the cell junction. It localises to the adherens junction. The protein resides in the cell projection. The protein localises to the cilium. Its subcellular location is the flagellum. It is found in the cytoplasmic vesicle. It localises to the secretory vesicle. The protein resides in the acrosome. Active metalloproteinase with gelatinolytic and collagenolytic activity. Plays a role in the wound healing process. Mediates both heterotypic intraepithelial cell/T-cell interactions and homotypic T-cell aggregation. Inhibits beta-1 integrin-mediated cell adhesion and migration of airway smooth muscle cells. Suppresses cell motility on or towards fibronectin possibly by driving alpha-v/beta-1 integrin (ITAGV-ITGB1) cell surface expression via ERK1/2 inactivation. Cleaves E-cadherin in response to growth factor deprivation. Plays a role in glomerular cell migration. Plays a role in pathological neovascularization. May play a role in cartilage remodeling. May be proteolytically processed, during sperm epididymal maturation and the acrosome reaction. May play a role in sperm-egg binding through its disintegrin domain. Interactions with egg membrane could be mediated via binding between the disintegrin-like domain to one or more integrin receptors on the egg. The sequence is that of Disintegrin and metalloproteinase domain-containing protein 15 (Adam15) from Mus musculus (Mouse).